Here is a 651-residue protein sequence, read N- to C-terminus: MGKKHKKHKSDKHPYEEYVEKPLKLVLKVGGNEVAELSTGSAGLDSSLYEDKSEHEKHKDRKRKKRKKGEKQVPGEEKEKRKRKVKEDKRKRDREHPDSEGEQELRCQTPIRLELSPEKPLTSSLSKQEEVEQTPLQEALNQLMRQLQRKDPSSFFSFPVTDFIAPGYSMIIKNPMDFSTMKEKIKNNGYQSIEELKDNFKLMCTNAMTYNKPDTIYYKAAKKLLHSGMKILSQERIQSLKQSIEFMADLQKTRKQKDKVELQLSGEDESGSGKDKGEPVDGDTKAFKTPNKEHKKKDKDLLEDKLRINSLEREQEQIDRIVRESGGKLTRRLANSQCEFERRKPDGTTTLGLLNPVDLTAGEAGYCPVKLGMTAGRLQSGVNMLQGFKEDKRNKVTPVTYLNYGPYSSYAPTYDSTFANISKEDSDLIYSTYGEDSNQGSFSIHEFLMKSQDYPFLMADSLLDVLTKGGHSRSLRELETPLEEDEGPHERSDALKEIMEIDIAARLDSANNDRLTALKAVTNFGMPMEEFDSEEAEIFQRKLDETTKLLRELQDAQNERLSTKPPPNMICLLGPSYREMHLAERVTNNLKELAQQVTPGDIVSTYGIRKAMGISIPLPDIGDSGVDLTDEFQEPKKTVTITENECGPVTV.

2 disordered regions span residues 36 to 133 (ELST…EVEQ) and 257 to 298 (KDKV…KKKD). Positions 58–69 (HKDRKRKKRKKG) are enriched in basic residues. The Nuclear localization signal motif lies at 65 to 96 (KRKKGEKQVPGEEKEKRKRKVKEDKRKRDREH). Residues 70–105 (EKQVPGEEKEKRKRKVKEDKRKRDREHPDSEGEQEL) show a composition bias toward basic and acidic residues. One can recognise a Bromo domain in the interval 131–235 (VEQTPLQEAL…HSGMKILSQE (105 aa)). Over residues 271–298 (GSGKDKGEPVDGDTKAFKTPNKEHKKKD) the composition is skewed to basic and acidic residues. Residues 533 to 564 (SEEAEIFQRKLDETTKLLRELQDAQNERLSTK) adopt a coiled-coil conformation.

It is found in the nucleus. It localises to the chromosome. Functionally, acts both as coactivator and as corepressor. May play a role in chromatin remodeling. Participates in the Wnt signaling pathway. Transcriptional corepressor that down-regulates the expression of target genes. Binds to target promoters, leading to increased histone H3 acetylation. Coactivator for TP53-mediated activation of transcription of a set of target genes. Required for TP53-mediated cell-cycle arrest in response to oncogene activation. Inhibits cell cycle progression from G1 to S phase. This is Bromodomain-containing protein 7 (BRD7) from Gallus gallus (Chicken).